We begin with the raw amino-acid sequence, 437 residues long: Protein farnesyltransferase subunit beta (437 aa).

PFTB repeat units lie at residues 123 to 164 (ATDV…CIIG), 174 to 215 (REKL…SLTN), 222 to 263 (FEGT…VILK), 270 to 312 (LKSL…PLLH), and 332 to 374 (QQAL…SIAQ). (2E,6E)-farnesyl diphosphate contacts are provided by residues 248–251 (HGGY) and 291–294 (RCNK). Residues Asp297 and Cys299 each coordinate Zn(2+). Position 300–303 (300–303 (YSFW)) interacts with (2E,6E)-farnesyl diphosphate. His362 provides a ligand contact to Zn(2+). The residue at position 436 (Thr436) is a Phosphothreonine.

The protein belongs to the protein prenyltransferase subunit beta family. Heterodimer of FNTA and FNTB. It depends on Zn(2+) as a cofactor.

It carries out the reaction L-cysteinyl-[protein] + (2E,6E)-farnesyl diphosphate = S-(2E,6E)-farnesyl-L-cysteinyl-[protein] + diphosphate. Functionally, essential subunit of the farnesyltransferase complex. Catalyzes the transfer of a farnesyl moiety from farnesyl diphosphate to a cysteine at the fourth position from the C-terminus of several proteins having the C-terminal sequence Cys-aliphatic-aliphatic-X. The protein is Protein farnesyltransferase subunit beta (FNTB) of Homo sapiens (Human).